Here is a 213-residue protein sequence, read N- to C-terminus: Protein Syd (213 aa).

The protein belongs to the Syd family.

The protein resides in the cell inner membrane. In terms of biological role, interacts with the SecY protein in vivo. May bind preferentially to an uncomplexed state of SecY, thus functioning either as a chelating agent for excess SecY in the cell or as a regulatory factor that negatively controls the translocase function. This Shewanella pealeana (strain ATCC 700345 / ANG-SQ1) protein is Protein Syd.